The sequence spans 2009 residues: Rootletin (2009 aa).

Coiled-coil stretches lie at residues 74-265 (EMAS…VTSD) and 346-438 (ASLH…LRLQ). Disordered stretches follow at residues 462-519 (ALSD…CSDS), 575-594 (RDQT…EAQR), 636-665 (ELKR…LERS), 1180-1225 (EAQR…ELRS), and 1448-1501 (GRVS…EAVR). Positions 463-484 (LSDTESGVQLSSSERTADTSDG) are enriched in polar residues. Coiled coils occupy residues 550–1058 (LGSV…LLAE) and 1091–1439 (LEME…GLRS). A compositionally biased stretch (low complexity) spans 577–586 (QTAASAQAQE). The segment covering 656–665 (ARARRELERS) has biased composition (basic and acidic residues). Serine 1453, serine 1463, and serine 1469 each carry phosphoserine. Tyrosine 1475 carries the post-translational modification Phosphotyrosine. Residues serine 1476, serine 1479, serine 1483, serine 1489, and serine 1568 each carry the phosphoserine modification. Residues 1479-1494 (SQPPSPGLIASPAPPD) are compositionally biased toward pro residues. 2 coiled-coil regions span residues 1498–1697 (EAVR…GTLQ) and 1744–1998 (HLQK…RSSA). The tract at residues 1957-2009 (QVQTERTLEARERAHRQRVSGLEEQVSTLKAQLHQELRRSSASVSLPPGTPEK) is disordered.

This sequence belongs to the rootletin family. In terms of assembly, homomer. Interacts with KLC3, NEK2 and the N-terminus of CEP250. Interacts with CEP44. Post-translationally, phosphorylated by NEK2 which may regulate its association with centrosomes. As to expression, highest expression detected in photoreceptor cells of retina. Expressed at lower levels in brain, trachea and kidney. Detected in all major ciliated epithelia. During embryonic development, enriched along the apical domains of neuroepithelium in brain ventricular zone, in primordia of retinal pigment epithelia and in neural retina.

The protein resides in the cytoplasm. It is found in the cytoskeleton. It localises to the microtubule organizing center. The protein localises to the centrosome. Its subcellular location is the centriole. The protein resides in the cilium basal body. Major structural component of the ciliary rootlet, a cytoskeletal-like structure in ciliated cells which originates from the basal body at the proximal end of a cilium and extends proximally toward the cell nucleus. Furthermore, is required for the correct positioning of the cilium basal body relative to the cell nucleus, to allow for ciliogenesis. Contributes to centrosome cohesion before mitosis. The sequence is that of Rootletin from Mus musculus (Mouse).